Here is a 1322-residue protein sequence, read N- to C-terminus: Phosphoribosylformylglycinamidine synthase (1322 aa).

Residues glycine 307 to aspartate 318 and alanine 678 each bind ATP. Residues glutamate 718, asparagine 722, and aspartate 886 each coordinate Mg(2+). The Glutamine amidotransferase type-1 domain occupies methionine 1069–glycine 1322. Cysteine 1162 acts as the Nucleophile in catalysis. Active-site residues include histidine 1287 and glutamate 1289.

It in the N-terminal section; belongs to the FGAMS family. Monomer.

It localises to the cytoplasm. The enzyme catalyses N(2)-formyl-N(1)-(5-phospho-beta-D-ribosyl)glycinamide + L-glutamine + ATP + H2O = 2-formamido-N(1)-(5-O-phospho-beta-D-ribosyl)acetamidine + L-glutamate + ADP + phosphate + H(+). Its pathway is purine metabolism; IMP biosynthesis via de novo pathway; 5-amino-1-(5-phospho-D-ribosyl)imidazole from N(2)-formyl-N(1)-(5-phospho-D-ribosyl)glycinamide: step 1/2. Its function is as follows. Phosphoribosylformylglycinamidine synthase involved in the purines biosynthetic pathway. Catalyzes the ATP-dependent conversion of formylglycinamide ribonucleotide (FGAR) and glutamine to yield formylglycinamidine ribonucleotide (FGAM) and glutamate. The polypeptide is Phosphoribosylformylglycinamidine synthase (Photobacterium profundum (strain SS9)).